The sequence spans 240 residues: SURF1-like protein (240 aa).

2 consecutive transmembrane segments (helical) span residues 7 to 23 and 201 to 219; these read VFIT…WQLS and YALT…YVIY.

This sequence belongs to the SURF1 family.

Its subcellular location is the cell membrane. In Rickettsia conorii (strain ATCC VR-613 / Malish 7), this protein is SURF1-like protein.